Reading from the N-terminus, the 365-residue chain is NAD(P)H-quinone oxidoreductase subunit 1, chloroplastic (365 aa).

6 helical membrane-spanning segments follow: residues 32-52 (LFPI…IVWL), 98-118 (YLFS…YLII), 129-149 (LSIG…GLLM), 257-279 (LFYV…LYLG), 302-322 (VFGT…FLFI), and 338-358 (LLNL…LLTT).

This sequence belongs to the complex I subunit 1 family. As to quaternary structure, NDH is composed of at least 16 different subunits, 5 of which are encoded in the nucleus.

Its subcellular location is the plastid. The protein resides in the chloroplast thylakoid membrane. It carries out the reaction a plastoquinone + NADH + (n+1) H(+)(in) = a plastoquinol + NAD(+) + n H(+)(out). The enzyme catalyses a plastoquinone + NADPH + (n+1) H(+)(in) = a plastoquinol + NADP(+) + n H(+)(out). NDH shuttles electrons from NAD(P)H:plastoquinone, via FMN and iron-sulfur (Fe-S) centers, to quinones in the photosynthetic chain and possibly in a chloroplast respiratory chain. The immediate electron acceptor for the enzyme in this species is believed to be plastoquinone. Couples the redox reaction to proton translocation, and thus conserves the redox energy in a proton gradient. The polypeptide is NAD(P)H-quinone oxidoreductase subunit 1, chloroplastic (Spinacia oleracea (Spinach)).